Consider the following 241-residue polypeptide: ATP-dependent dethiobiotin synthetase BioD (241 aa).

13–18 (DIGKTV) is an ATP binding site. T17 contributes to the Mg(2+) binding site. K38 is a catalytic residue. Residue S42 coordinates substrate. Residues D55, 116-119 (EGSG), and 180-181 (NK) contribute to the ATP site. Mg(2+)-binding residues include D55 and E116.

It belongs to the dethiobiotin synthetase family. Homodimer. Mg(2+) is required as a cofactor.

It is found in the cytoplasm. The enzyme catalyses (7R,8S)-7,8-diammoniononanoate + CO2 + ATP = (4R,5S)-dethiobiotin + ADP + phosphate + 3 H(+). It participates in cofactor biosynthesis; biotin biosynthesis; biotin from 7,8-diaminononanoate: step 1/2. Catalyzes a mechanistically unusual reaction, the ATP-dependent insertion of CO2 between the N7 and N8 nitrogen atoms of 7,8-diaminopelargonic acid (DAPA, also called 7,8-diammoniononanoate) to form a ureido ring. The chain is ATP-dependent dethiobiotin synthetase BioD from Clostridium kluyveri (strain NBRC 12016).